The primary structure comprises 1271 residues: Clustered mitochondria protein homolog (1271 aa).

TPR repeat units follow at residues 104-138 (RHKPYTLAAVYEHLNKFREVIGLHFIDRRAFELGE) and 502-535 (CYGLSTDGTKVYSDSQFHEALKPIAEAFHMKPHK). In terms of domain architecture, Clu spans 329–580 (DQSRPQLSIL…RSTPLDIDFI (252 aa)). Positions 729–763 (QEEKSKIEDNEKAIEEEKKEEKTEKKEEKEEKADE) are enriched in basic and acidic residues. The tract at residues 729–783 (QEEKSKIEDNEKAIEEEKKEEKTEKKEEKEEKADEEKSENEEDKTKPEEPSKGVF) is disordered. TPR repeat units follow at residues 1067 to 1100 (ISSYINSAYFEAANSSYVNAFKLYEKALGDWDFV), 1109 to 1142 (VTTLTNLAEILAQLKITDKANRLFSAALELSEKI), and 1151 to 1184 (AMIHYRFAGTLVNENRFDEALGHFEKAHTTFSRH). The interval 1212–1271 (QAKDKNKPKKVKAPPVPPQATTKKSKNKSKMAQTQISKLHLNSSTRFSSSSRVKPRLKKK) is disordered. The span at 1241–1253 (KMAQTQISKLHLN) shows a compositional bias: polar residues. The span at 1254 to 1263 (SSTRFSSSSR) shows a compositional bias: low complexity.

The protein belongs to the CLU family. As to quaternary structure, may associate with the eukaryotic translation initiation factor 3 (eIF-3) complex.

The protein localises to the cytoplasm. Functionally, mRNA-binding protein involved in proper cytoplasmic distribution of mitochondria. The protein is Clustered mitochondria protein homolog of Meyerozyma guilliermondii (strain ATCC 6260 / CBS 566 / DSM 6381 / JCM 1539 / NBRC 10279 / NRRL Y-324) (Yeast).